We begin with the raw amino-acid sequence, 282 residues long: Endo-1,4-beta-xylanase B (282 aa).

A signal peptide spans 1 to 39; it reads MGISSILLSALIAGGALALPAAEPVSFDIRDENITLARR. N-linked (GlcNAc...) asparagine glycosylation is present at Asn-33. In terms of domain architecture, GH11 spans 40–219; sequence AEAINYNQDY…GSGSGQISLS (180 aa). Glu-117 functions as the Nucleophile in the catalytic mechanism. The active-site Proton donor is Glu-206. A disordered region spans residues 214-245; that stretch reads GQISLSKGTGGGSTTTTPTGPTSTSTAPSSGG. Over residues 227-243 the composition is skewed to low complexity; sequence TTTTPTGPTSTSTAPSS. Positions 246–282 constitute a CBM1 domain; sequence TGAAQWGQCGGIGWTGPTTCVAPYTCKYENAYYSQCQ.

Belongs to the glycosyl hydrolase 11 (cellulase G) family.

It is found in the secreted. The enzyme catalyses Endohydrolysis of (1-&gt;4)-beta-D-xylosidic linkages in xylans.. It functions in the pathway glycan degradation; xylan degradation. Its activity is regulated as follows. Significantly inhibited by the wheat xylanase inhibiting protein I (XIP-I) and the proteinaceous endoxylanase Triticum aestivum xylanase inhibitors I (TAXI-I), but not TAXI-II. Endo-1,4-beta-xylanase involved in the hydrolysis of xylan, a major structural heterogeneous polysaccharide found in plant biomass representing the second most abundant polysaccharide in the biosphere, after cellulose. The polypeptide is Endo-1,4-beta-xylanase B (xynB) (Talaromyces funiculosus (Fruitlet core rot fungus)).